The chain runs to 679 residues: uncharacterized protein (679 aa).

12 consecutive transmembrane segments (helical) span residues 23-41, 46-65, 72-90, 94-113, 120-142, 157-179, 362-381, 385-404, 411-433, 438-455, 462-481, and 496-515; these read YALRNTIAMCLALTFAYYL, PYWAMTSAAVVSFPTVGGVI, IAGSLLGATAALIIAGHTL, WLFLFSMAAWIGFCTWACAH, YAFQLSGYTAAIIAFPMVNIVEI, IVGILCGGMMMMILPSTSDGTAL, WSGVRTFCTLTVIGAWSIGA, SGPGALTLAAISCVLYSIVA, SLLMRTLVLLSLFSFVVKFGLMV, LWQFLLFLFPLFVTMQLL, LAGLWGQLIVFMGSFIAVTN, and AKIVGVAISWLAFAILRPGS.

Belongs to the aromatic acid exporter ArAE (TC 2.A.85) family.

It is found in the cell membrane. This is an uncharacterized protein from Salmonella typhimurium (strain LT2 / SGSC1412 / ATCC 700720).